The sequence spans 362 residues: Alanine racemase (362 aa).

Lys33 acts as the Proton acceptor; specific for D-alanine in catalysis. Residue Lys33 is modified to N6-(pyridoxal phosphate)lysine. Residue Arg129 coordinates substrate. Residue Tyr254 is the Proton acceptor; specific for L-alanine of the active site. Met302 is a binding site for substrate.

Belongs to the alanine racemase family. Pyridoxal 5'-phosphate serves as cofactor.

It carries out the reaction L-alanine = D-alanine. It functions in the pathway amino-acid biosynthesis; D-alanine biosynthesis; D-alanine from L-alanine: step 1/1. In terms of biological role, catalyzes the interconversion of L-alanine and D-alanine. May also act on other amino acids. The protein is Alanine racemase (alr) of Xylella fastidiosa (strain 9a5c).